Consider the following 239-residue polypeptide: Ribitol-5-phosphate cytidylyltransferase (239 aa).

CTP contacts are provided by residues 7–10 (FAGG) and 80–86 (GETGQMS).

This sequence belongs to the IspD/TarI cytidylyltransferase family. TarI subfamily.

It catalyses the reaction D-ribitol 5-phosphate + CTP + H(+) = CDP-L-ribitol + diphosphate. It participates in cell wall biogenesis; poly(ribitol phosphate) teichoic acid biosynthesis. Functionally, catalyzes the transfer of the cytidylyl group of CTP to D-ribitol 5-phosphate. The chain is Ribitol-5-phosphate cytidylyltransferase from Streptococcus agalactiae serotype III (strain NEM316).